The following is a 384-amino-acid chain: Potassium channel subfamily K member 18 (384 aa).

The Cytoplasmic segment spans residues methionine 1–glycine 23. A helical membrane pass occupies residues leucine 24 to isoleucine 44. N-linked (GlcNAc...) asparagine glycosylation occurs at asparagine 70. Residues phenylalanine 103–glycine 129 constitute an intramembrane region (pore-forming). Positions 116, 117, 118, and 119 each coordinate K(+). A selectivity filter 1 region spans residues threonine 116–tyrosine 121. Residues lysine 130–leucine 148 form a helical membrane-spanning segment. The Cytoplasmic portion of the chain corresponds to threonine 149–aspartate 280. Residues proline 200–serine 205 are interaction with calcineurin. The interaction with YWHAH stretch occupies residues arginine 249 to proline 254. Phosphoserine occurs at positions 252 and 264. A helical transmembrane segment spans residues isoleucine 281–leucine 301. Positions phenylalanine 314 to aspartate 328 form an intramembrane region, pore-forming. The interval threonine 323–aspartate 328 is selectivity filter 2. Residues asparagine 335–phenylalanine 355 traverse the membrane as a helical segment. Over lysine 356–lysine 384 the chain is Cytoplasmic.

Belongs to the two pore domain potassium channel (TC 1.A.1.8) family. In terms of assembly, homodimer. Heterodimer with KCNK2. Heterodimer with KCNK10. Interacts with calcineurin. Interacts with YWHAH, in a phosphorylation-dependent manner. Post-translationally, N-glycosylated. In terms of processing, phosphorylation of Ser-264 is required for the binding of 14-3-3eta/YWHAH. Calcineurin-mediated dephosphorylation enhances channel activity. Expressed in dorsal root ganglion and trigeminal ganglion neurons. Detected at low levels in spinal cord. Expressed in regulatory T cells (at protein level).

It is found in the cell membrane. It carries out the reaction K(+)(in) = K(+)(out). Its activity is regulated as follows. Activated by volatile anesthetics but inhibited by amide local anesthetics. Inhibited by Ba(2+) ions. Inhibited by free polyunsaturated fatty acids. Channel conductance is sensitive to intracellular pH, it decreases at acidic pH and increases at basic pH. In contrast to its mouse ortholog, it is not regulated by extracellular protons. Insensitive to changes in temperature. Its function is as follows. K(+) channel that conducts outward and inward rectifying currents at depolarized and hyperpolarized membrane potentials, respectively. The outward rectifying currents are voltage-dependent, coupled to K(+) electrochemical gradient across the membrane, whereas the inward currents can be induced in response to activation of Ca(2+)-mobilizing receptors. Homo- and heterodimerizes to form functional channels with distinct regulatory and gating properties. In trigeminal ganglia sensory neurons, the heterodimers of KCNK18/TRESK and KCNK2/TREK-1 or KCNK10/TREK-2 inhibit neuronal firing and neurogenic inflammation by stabilizing the resting membrane potential at K(+) equilibrium potential as well as by regulating the threshold of action potentials and the spike frequency. In thymocytes, conducts K(+) currents upon T cell receptor (TCR) signaling leading to sustained Ca(2+) influx and NF-kappa-B activation, FOXP3 transcription and positive selection of regulatory T cell (Treg) progenitor subsets. Appears to mediate the analgesics effects of hydroxy-alpha-sanshool, a metabolite naturally present in Schezuan pepper and other Xanthoxylum plants. The chain is Potassium channel subfamily K member 18 from Homo sapiens (Human).